The primary structure comprises 464 residues: UDP-N-acetylmuramate--L-alanine ligase (464 aa).

117 to 123 (GTHGKTT) contacts ATP.

The protein belongs to the MurCDEF family.

Its subcellular location is the cytoplasm. It carries out the reaction UDP-N-acetyl-alpha-D-muramate + L-alanine + ATP = UDP-N-acetyl-alpha-D-muramoyl-L-alanine + ADP + phosphate + H(+). Its pathway is cell wall biogenesis; peptidoglycan biosynthesis. Its function is as follows. Cell wall formation. The chain is UDP-N-acetylmuramate--L-alanine ligase from Streptomyces avermitilis (strain ATCC 31267 / DSM 46492 / JCM 5070 / NBRC 14893 / NCIMB 12804 / NRRL 8165 / MA-4680).